The following is a 66-amino-acid chain: Brevinin-1DYb (66 aa).

The first 22 residues, 1-22 (MFTLKKSLLLLFFLGTISLSLC), serve as a signal peptide directing secretion. Residues 23–44 (EEERNAEEERRDYPEERDVEVE) constitute a propeptide that is removed on maturation. Cysteine 60 and cysteine 66 are disulfide-bonded.

Expressed by the skin glands.

The protein localises to the secreted. Antimicrobial peptide. Has low activity against the Gram-positive bacterium S.aureus and the Gram-negative bacterium E.coli (MIC&lt;15 uM). Has a strong hemolytic activity. This chain is Brevinin-1DYb, found in Rana dybowskii (Dybovsky's frog).